A 654-amino-acid polypeptide reads, in one-letter code: Integrator complex subunit 9 (654 aa).

Positions 1, 2, 18, 19, 504, 508, and 509 each coordinate 1D-myo-inositol hexakisphosphate.

This sequence belongs to the metallo-beta-lactamase superfamily. RNA-metabolizing metallo-beta-lactamase-like family. INTS9 subfamily. Belongs to the multiprotein complex Integrator, at least composed of IntS1, IntS2, IntS3, IntS4, omd/IntS5, IntS6, defl/IntS7, IntS8, IntS9, IntS10, IntS11, IntS12, asun/IntS13, IntS14 and IntS15. The core complex associates with protein phosphatase 2A subunits mts/PP2A and Pp2A-29B, to form the Integrator-PP2A (INTAC) complex. Within the complex, interacts with IntS1 and IntS12. IntS9 is part of the RNA endonuclease subcomplex, composed of IntS4, IntS9, IntS11 and inositol hexakisphosphate (InsP6).

It localises to the nucleus. It is found in the cytoplasm. Its subcellular location is the cytosol. Its function is as follows. Component of the integrator complex, a multiprotein complex that terminates RNA polymerase II (Pol II) transcription in the promoter-proximal region of genes. The integrator complex provides a quality checkpoint during transcription elongation by driving premature transcription termination of transcripts that are unfavorably configured for transcriptional elongation: the complex terminates transcription by (1) catalyzing dephosphorylation of the C-terminal domain (CTD) of Pol II subunit Polr2A/Rbp1 and Spt5, and (2) degrading the exiting nascent RNA transcript via endonuclease activity. The integrator complex is also involved in the 3'-end processing of the U7 snRNA, and also the spliceosomal snRNAs U1, U2, U4 and U5. The polypeptide is Integrator complex subunit 9 (Drosophila melanogaster (Fruit fly)).